A 168-amino-acid polypeptide reads, in one-letter code: Protein yop-1 (168 aa).

The Cytoplasmic portion of the chain corresponds to 1–35 (MSSPQDRAQQYIGQLDKELSKYPTLNNLEKTTGVP). A helical membrane pass occupies residues 36–55 (KAYAVIGLVALYFFLIIFNL). G56 is a topological domain (lumenal). Residues 57–76 (GQLLTNLAGFVLPGYYSLNA) traverse the membrane as a helical segment. Residues 77–86 (LFTASKQDDT) are Cytoplasmic-facing. Residues 87 to 103 (QWLTYWVVFSLFTVIES) traverse the membrane as a helical segment. Topologically, residues 104 to 105 (LI) are lumenal. Residues 106 to 124 (SVVYWFPFYFTFKFVFLLW) traverse the membrane as a helical segment. Topologically, residues 125–168 (LSLPTFKGAETIFRSFLAPTLGRYFQNGSTASGLRAKADAVHTD) are cytoplasmic.

It belongs to the DP1 family. Oligomer.

The protein localises to the endoplasmic reticulum membrane. It is found in the golgi apparatus membrane. Its function is as follows. Required to generate and maintain the structure of the tubular endoplasmic reticulum network and the vacuole. Induces high curvature in membranes and causes membrane tubule formation. Involved in membrane/vesicle trafficking. This chain is Protein yop-1 (yop-1), found in Neurospora crassa (strain ATCC 24698 / 74-OR23-1A / CBS 708.71 / DSM 1257 / FGSC 987).